The following is a 604-amino-acid chain: uncharacterized protein (604 aa).

The first 19 residues, 1 to 19 (MIVRILLLFIALFTFGVQA), serve as a signal peptide directing secretion.

The protein to H.influenzae HbpA.

This is an uncharacterized protein from Escherichia coli (strain K12).